A 626-amino-acid chain; its full sequence is ATP-dependent zinc metalloprotease FtsH (626 aa).

Residues 1 to 5 (MNFRN) are Cytoplasmic-facing. A helical transmembrane segment spans residues 6–26 (LAIWLVIVAVLGGVFVVSQNS). Residues 27-98 (RTKSSSEISY…DVKFKSGSIS (72 aa)) are Periplasmic-facing. A helical membrane pass occupies residues 99–119 (FLAILVQLLPILLVVGVWLFL). Topologically, residues 120-626 (MRQMQGGAKG…SPGAGASVTA (507 aa)) are cytoplasmic. ATP is bound at residue 191-198 (GPPGTGKT). Zn(2+) is bound at residue histidine 413. Residue glutamate 414 is part of the active site. Zn(2+)-binding residues include histidine 417 and aspartate 491.

It in the central section; belongs to the AAA ATPase family. The protein in the C-terminal section; belongs to the peptidase M41 family. As to quaternary structure, homohexamer. It depends on Zn(2+) as a cofactor.

It localises to the cell inner membrane. Acts as a processive, ATP-dependent zinc metallopeptidase for both cytoplasmic and membrane proteins. Plays a role in the quality control of integral membrane proteins. Its function is as follows. Absence of FtsH leads to increased sigma-32 levels, which suggests, in analogy to E.coli, that sigma-32 is a substrate for FtsH. May play a role in the general stress response, as overexpression leads to improved resistance to salt stress. The chain is ATP-dependent zinc metalloprotease FtsH from Caulobacter vibrioides (strain NA1000 / CB15N) (Caulobacter crescentus).